A 437-amino-acid chain; its full sequence is MAAGTLYTYPENWRAFKALIAAQYSGAQVRVLSAPPHFHFGQTNRTPEFLRKFPAGKVPAFEGDDGFCVFESNAIAYYVSNEELRGSTPEAAAQVVQWVSFADSDIVPPASTWVFPTLGIMHHNKQATENAKEEVKRILGLLDTHLKTRTFLVGERVTLADITVVCTLLWLYKQVLEPSFRQAFPNTNRWFLTCINQPQFRAILGEVKLCEKMAQFDAKKFAESQPKKDTPRKEKGSREEKQKPQAERKEEKKAAAPAPEEEMDECEQALAAEPKAKDPFAHLPKSTFVLDEFKRKYSNEDTLSVALPYFWEHFDKDGWSLWYAEYRFPEELTQTFMSCNLITGMFQRLDKLRKNAFASVILFGTNNSSSISGVWVFRGQELAFPLSPDWQVDYESYTWRKLDPGSEETQTLVREYFSWEGTFQHVGKAVNQGKIFK.

Position 2 is an N-acetylalanine (A2). One can recognise a GST N-terminal domain in the interval 2–87 (AAGTLYTYPE…YVSNEELRGS (86 aa)). One can recognise a GST C-terminal domain in the interval 88-216 (TPEAAAQVVQ…VKLCEKMAQF (129 aa)). N6-acetyllysine occurs at positions 147 and 212. Residues 221–254 (FAESQPKKDTPRKEKGSREEKQKPQAERKEEKKA) are compositionally biased toward basic and acidic residues. The tract at residues 221-268 (FAESQPKKDTPRKEKGSREEKQKPQAERKEEKKAAAPAPEEEMDECEQ) is disordered. K253 participates in a covalent cross-link: Glycyl lysine isopeptide (Lys-Gly) (interchain with G-Cter in SUMO1). The region spanning 276–437 (AKDPFAHLPK…KAVNQGKIFK (162 aa)) is the EF-1-gamma C-terminal domain. A Glycyl lysine isopeptide (Lys-Gly) (interchain with G-Cter in SUMO2) cross-link involves residue K285. At K401 the chain carries N6-acetyllysine. K434 carries the post-translational modification N6-acetyllysine; alternate. Residue K434 is modified to N6-malonyllysine; alternate.

In terms of assembly, EF-1 is composed of four subunits: alpha, beta, delta, and gamma.

Functionally, probably plays a role in anchoring the complex to other cellular components. The protein is Elongation factor 1-gamma (Eef1g) of Mus musculus (Mouse).